We begin with the raw amino-acid sequence, 393 residues long: MSLKLSLVSLSNTDLPIETKQQALIDIVLRFLTPQERASLFESITHQRETNLLARYPEYQSKSLSVLFELMDYRDLVRLDPNNLHDDVYLLELTVAECFPHWLDFWCACEIEAIKQKYSLENREPATELSFEDASYSAMLIDDISKSSMRVQLPSYPVAMTLSDAVALSNLELFVQGEKWYEILPLLSLSQKGKHFILLQTQTTPVLVASALIQDWNQRNTWLSYAPQFNSEKWRFCLPLHGYQELNRLDILASDLVTDYGSLTVFDQAFQTHITKTEMVCEVLRLTVSGSVQHKLYFLYLAQKELMNVLFQSGYKVGFTIIEQAFMLNFYQSIDSKAYFHSGYCDINGDGINTYRGFWNFESMVDTFKRTDFRDYKRRIRVIRQNTQVNEHA.

It belongs to the LuxM / VanM family.

The catalysed reaction is a fatty acyl-[ACP] + S-adenosyl-L-methionine = an N-acyl-L-homoserine lactone + S-methyl-5'-thioadenosine + holo-[ACP] + H(+). In Vibrio parahaemolyticus serotype O3:K6 (strain RIMD 2210633), this protein is Acyl-homoserine-lactone synthase OpaM (opaM).